Here is a 147-residue protein sequence, read N- to C-terminus: 3-hydroxyacyl-[acyl-carrier-protein] dehydratase FabZ (147 aa).

Residue His-53 is part of the active site.

The protein belongs to the thioester dehydratase family. FabZ subfamily.

It is found in the cytoplasm. The catalysed reaction is a (3R)-hydroxyacyl-[ACP] = a (2E)-enoyl-[ACP] + H2O. Its function is as follows. Involved in unsaturated fatty acids biosynthesis. Catalyzes the dehydration of short chain beta-hydroxyacyl-ACPs and long chain saturated and unsaturated beta-hydroxyacyl-ACPs. This chain is 3-hydroxyacyl-[acyl-carrier-protein] dehydratase FabZ, found in Synechococcus sp. (strain WH7803).